Reading from the N-terminus, the 537-residue chain is Ataxin-10 homolog (537 aa).

Belongs to the ataxin-10 family.

It is found in the cytoplasm. May play a role in the regulation of cytokinesis. This chain is Ataxin-10 homolog (CTR86), found in Kluyveromyces lactis (strain ATCC 8585 / CBS 2359 / DSM 70799 / NBRC 1267 / NRRL Y-1140 / WM37) (Yeast).